The primary structure comprises 276 residues: MIRVIALSNPRLAQAFVDYMRTQQVHLDMRPQGHEAELWLEDETQLSKVQEALEIFLRDPTNPRYLAASWQTGSMDTGIQYQRYSYLQTLKQKAGPLTLSVMVVTIAVFILMQISGYESVMTWLAFPAEGQQLQLWRWFSHALLHFSLLHILFNLMWWWYLGGPVEKVLGTGKLLVIALVSALVSGWAQSWCSGTYFGGLSGVVYALMGYVWLRGEREPDGYLSMPRSLMAFALLWLVAGYFDILGMSIANAAHVAGLIVGLLMAFWDTYNKTNPR.

Helical transmembrane passes span 94 to 114 (AGPL…LMQI), 142 to 162 (ALLH…WYLG), 168 to 188 (VLGT…SGWA), 193 to 213 (SGTY…YVWL), 229 to 249 (LMAF…GMSI), and 250 to 270 (ANAA…WDTY). The active-site Nucleophile is the S201. H254 is a catalytic residue.

It belongs to the peptidase S54 family.

It localises to the cell inner membrane. The enzyme catalyses Cleaves type-1 transmembrane domains using a catalytic dyad composed of serine and histidine that are contributed by different transmembrane domains.. In terms of biological role, rhomboid-type serine protease that catalyzes intramembrane proteolysis. This Pectobacterium atrosepticum (strain SCRI 1043 / ATCC BAA-672) (Erwinia carotovora subsp. atroseptica) protein is Rhomboid protease GlpG.